Here is a 189-residue protein sequence, read N- to C-terminus: Probable nicotinate-nucleotide adenylyltransferase (189 aa).

It belongs to the NadD family.

The catalysed reaction is nicotinate beta-D-ribonucleotide + ATP + H(+) = deamido-NAD(+) + diphosphate. Its pathway is cofactor biosynthesis; NAD(+) biosynthesis; deamido-NAD(+) from nicotinate D-ribonucleotide: step 1/1. Functionally, catalyzes the reversible adenylation of nicotinate mononucleotide (NaMN) to nicotinic acid adenine dinucleotide (NaAD). This chain is Probable nicotinate-nucleotide adenylyltransferase, found in Bacillus cereus (strain G9842).